Consider the following 413-residue polypeptide: L-cysteine:1D-myo-inositol 2-amino-2-deoxy-alpha-D-glucopyranoside ligase (413 aa).

Position 15 (Cys-15) interacts with Zn(2+). Residues 15–18, Thr-30, and 53–55 each bind L-cysteinyl-5'-AMP; these read CGIT and NVT. A 'HIGH' region motif is present at residues 17–27; sequence ITPYDATHLGH. A 'ERGGDP' region motif is present at residues 155–160; the sequence is ERGGDP. Trp-195 is an L-cysteinyl-5'-AMP binding site. Residue Cys-199 participates in Zn(2+) binding. L-cysteinyl-5'-AMP is bound at residue 217–219; the sequence is GTD. A Zn(2+)-binding site is contributed by His-224. Residue Val-251 coordinates L-cysteinyl-5'-AMP. A 'KMSKS' region motif is present at residues 257–261; the sequence is KMSKS.

The protein belongs to the class-I aminoacyl-tRNA synthetase family. MshC subfamily. Monomer. Zn(2+) is required as a cofactor.

It carries out the reaction 1D-myo-inositol 2-amino-2-deoxy-alpha-D-glucopyranoside + L-cysteine + ATP = 1D-myo-inositol 2-(L-cysteinylamino)-2-deoxy-alpha-D-glucopyranoside + AMP + diphosphate + H(+). Functionally, catalyzes the ATP-dependent condensation of GlcN-Ins and L-cysteine to form L-Cys-GlcN-Ins. In Frankia alni (strain DSM 45986 / CECT 9034 / ACN14a), this protein is L-cysteine:1D-myo-inositol 2-amino-2-deoxy-alpha-D-glucopyranoside ligase.